The sequence spans 373 residues: ATP synthase gamma chain 1, chloroplastic (373 aa).

A chloroplast-targeting transit peptide spans 1 to 50 (MACSNLTTMWVSSKPSLSADSSSLSFRSVLKCPTNTSSPPSRASSVSPLQ). Cysteine 139 is an active-site residue. A disulfide bond links cysteine 249 and cysteine 255. Serine 347 carries the phosphoserine modification.

Belongs to the ATPase gamma chain family. As to quaternary structure, F-type ATPases have 2 components, CF(1) - the catalytic core - and CF(0) - the membrane proton channel. CF(1) has five subunits: alpha(3), beta(3), gamma(1), delta(1), epsilon(1). CF(0) has four main subunits: a, b, b' and c. Interacts with PAB.

It is found in the plastid. Its subcellular location is the chloroplast thylakoid membrane. Its function is as follows. Produces ATP from ADP in the presence of a proton gradient across the membrane. The gamma chain is believed to be important in regulating ATPase activity and the flow of protons through the CF(0) complex. The sequence is that of ATP synthase gamma chain 1, chloroplastic (ATPC1) from Arabidopsis thaliana (Mouse-ear cress).